The following is a 240-amino-acid chain: L-isoleucine-4-hydroxylase (240 aa).

Fe cation is bound by residues H159, D161, and H212.

It belongs to the iron/ascorbate-dependent oxidoreductase family. Requires L-ascorbate as cofactor. It depends on Fe(2+) as a cofactor.

The catalysed reaction is L-isoleucine + 2-oxoglutarate + O2 = (4S)-4-hydroxy-L-isoleucine + succinate + CO2. Its function is as follows. Catalyzes the hydroxylation of L-isoleucine to produce (4S)-4-hydroxy-L-isoleucine. Can also catalyze the hydroxylation of L-leucine, L-norvaline, L-norleucine and L-allo-isoleucine, as well as the sulfoxidation of L-methionine, L-ethionine, S-methyl-L-cysteine, S-ethyl-L-cysteine, and S-allyl-L-cysteine. The protein is L-isoleucine-4-hydroxylase of Bacillus thuringiensis.